A 399-amino-acid polypeptide reads, in one-letter code: S-adenosylmethionine synthase (399 aa).

Residue His17 coordinates ATP. Asp19 is a Mg(2+) binding site. Glu45 provides a ligand contact to K(+). L-methionine contacts are provided by Glu58 and Gln101. The tract at residues 101 to 111 is flexible loop; that stretch reads QSPDIAQGVDE. ATP-binding positions include 177–179, 244–245, Asp253, 259–260, Ala276, and Lys280; these read DAK, RF, and RK. Residue Asp253 participates in L-methionine binding. Lys284 contacts L-methionine.

Belongs to the AdoMet synthase family. Homotetramer; dimer of dimers. Mg(2+) is required as a cofactor. K(+) serves as cofactor.

The protein resides in the cytoplasm. It catalyses the reaction L-methionine + ATP + H2O = S-adenosyl-L-methionine + phosphate + diphosphate. The protein operates within amino-acid biosynthesis; S-adenosyl-L-methionine biosynthesis; S-adenosyl-L-methionine from L-methionine: step 1/1. Functionally, catalyzes the formation of S-adenosylmethionine (AdoMet) from methionine and ATP. The overall synthetic reaction is composed of two sequential steps, AdoMet formation and the subsequent tripolyphosphate hydrolysis which occurs prior to release of AdoMet from the enzyme. This is S-adenosylmethionine synthase from Listeria monocytogenes serotype 4b (strain CLIP80459).